A 674-amino-acid polypeptide reads, in one-letter code: Acetyl-coenzyme A synthetase (674 aa).

CoA-binding positions include 201 to 204 (RGGR) and T320. ATP is bound by residues 396–398 (GEP), 420–425 (DTYWQT), D518, and R533. S541 is a CoA binding site. Residue R544 coordinates ATP. Residue R603 participates in CoA binding.

This sequence belongs to the ATP-dependent AMP-binding enzyme family.

It carries out the reaction acetate + ATP + CoA = acetyl-CoA + AMP + diphosphate. The protein is Acetyl-coenzyme A synthetase (acsA) of Dictyostelium discoideum (Social amoeba).